Here is a 423-residue protein sequence, read N- to C-terminus: Galactosylceramide sulfotransferase (423 aa).

Residues 1–12 (MTLLPKKPCKSK) lie on the Cytoplasmic side of the membrane. A helical; Signal-anchor for type II membrane protein membrane pass occupies residues 13-35 (AKGLLLGALFTSFLLLLYSYVVP). Topologically, residues 36–423 (PLYPNMAFTT…WKFLRDFLRW (388 aa)) are lumenal. 2 N-linked (GlcNAc...) asparagine glycosylation sites follow: Asn66 and Asn312.

It belongs to the galactose-3-O-sulfotransferase family. As to expression, expressed in brain, testis, kidney, stomach, small intestine, liver, and lung. Not detected in heart, skeletal muscle, and spleen.

It localises to the golgi apparatus membrane. It catalyses the reaction a beta-D-galactosyl-(1&lt;-&gt;1')-N-acylsphing-4-enine + 3'-phosphoadenylyl sulfate = an N-acyl-1-beta-D-(3-O-sulfo)-galactosyl-sphing-4-enine + adenosine 3',5'-bisphosphate + H(+). It carries out the reaction a 1-O-alkyl-2-acyl-3-O-(beta-D-galactosyl)-sn-glycerol + 3'-phosphoadenylyl sulfate = a 1-O-alkyl-2-acyl-3-(beta-D-3-sulfogalactosyl)-sn-glycerol + adenosine 3',5'-bisphosphate + H(+). The catalysed reaction is a beta-D-Gal-(1&lt;-&gt;1')-ceramide + 3'-phosphoadenylyl sulfate = 1-(3-O-sulfo-beta-D-galactosyl)-ceramide + adenosine 3',5'-bisphosphate + H(+). The enzyme catalyses a 1,2-diacyl-3-O-(beta-D-galactosyl)-sn-glycerol + 3'-phosphoadenylyl sulfate = 1,2-diacyl-3-(3-O-sulfo-beta-D-galactosyl)-sn-glycerol + adenosine 3',5'-bisphosphate + H(+). It catalyses the reaction a beta-D-Gal-(1-&gt;4)-beta-D-Glc-(1&lt;-&gt;1)-Cer(d18:1(4E)) + 3'-phosphoadenylyl sulfate = beta-D-3-sulfogalactosyl-(1-&gt;4)-beta-D-glucosyl-(1&lt;-&gt;1')-N-acylsphing-4-enine + adenosine 3',5'-bisphosphate + H(+). It participates in lipid metabolism; sphingolipid metabolism. In terms of biological role, catalyzes the transfer of a sulfate group to position 3 of non-reducing beta-galactosyl residues in glycerolipids and sphingolipids, therefore participates in the biosynthesis of sulfoglycolipids. Catalyzes the synthesis of galactosylceramide sulfate (sulfatide), a major lipid component of the myelin sheath and of monogalactosylalkylacylglycerol sulfate (seminolipid), present in spermatocytes. Seems to prefer beta-glycosides at the non-reducing termini of sugar chains attached to a lipid moiety. Also acts on lactosylceramide, galactosyl 1-alkyl-2-sn-glycerol and galactosyl diacylglycerol (in vitro). The chain is Galactosylceramide sulfotransferase from Mus musculus (Mouse).